Reading from the N-terminus, the 368-residue chain is Probable auxin efflux carrier component 5b (368 aa).

10 helical membrane passes run valine 7 to serine 27, cysteine 39 to alanine 59, valine 71 to alanine 91, cysteine 114 to leucine 134, leucine 145 to phenylalanine 165, valine 227 to isoleucine 247, valine 251 to alanine 271, leucine 286 to leucine 306, leucine 312 to alanine 332, and isoleucine 347 to isoleucine 367.

Belongs to the auxin efflux carrier (TC 2.A.69.1) family. As to expression, expressed at low levels in roots and shoot apex.

Its subcellular location is the membrane. Functionally, may act as a component of the auxin efflux carrier. The polypeptide is Probable auxin efflux carrier component 5b (Oryza sativa subsp. japonica (Rice)).